Reading from the N-terminus, the 137-residue chain is ATP synthase epsilon chain 1 (137 aa).

This sequence belongs to the ATPase epsilon chain family. As to quaternary structure, F-type ATPases have 2 components, CF(1) - the catalytic core - and CF(0) - the membrane proton channel. CF(1) has five subunits: alpha(3), beta(3), gamma(1), delta(1), epsilon(1). CF(0) has three main subunits: a, b and c.

Its subcellular location is the cell inner membrane. Its function is as follows. Produces ATP from ADP in the presence of a proton gradient across the membrane. The protein is ATP synthase epsilon chain 1 (atpC1) of Ralstonia nicotianae (strain ATCC BAA-1114 / GMI1000) (Ralstonia solanacearum).